The chain runs to 253 residues: Vitamin B12 import ATP-binding protein BtuD (253 aa).

The ABC transporter domain occupies 4 to 236 (LQLNNVSVGT…DVLSQVFEVD (233 aa)). Residue 32 to 39 (GPNGAGKS) participates in ATP binding.

The protein belongs to the ABC transporter superfamily. Vitamin B12 importer (TC 3.A.1.13.1) family. The complex is composed of two ATP-binding proteins (BtuD), two transmembrane proteins (BtuC) and a solute-binding protein (BtuF).

The protein resides in the cell inner membrane. The enzyme catalyses an R-cob(III)alamin(out) + ATP + H2O = an R-cob(III)alamin(in) + ADP + phosphate + H(+). Part of the ABC transporter complex BtuCDF involved in vitamin B12 import. Responsible for energy coupling to the transport system. The polypeptide is Vitamin B12 import ATP-binding protein BtuD (Yersinia pestis).